Here is a 330-residue protein sequence, read N- to C-terminus: Olfactory receptor 11H6 (330 aa).

The Extracellular segment spans residues 1–43 (MFFIIHSLVTSVFLTALGPQNRTMHFVTEFVLLGFHGQREMQS). A glycan (N-linked (GlcNAc...) asparagine) is linked at N21. Residues 44-64 (CFFSFILVLYLLTLLGNGAIV) form a helical membrane-spanning segment. Over 65–72 (CAVKLDRR) the chain is Cytoplasmic. The chain crosses the membrane as a helical span at residues 73–93 (LHTPMYILLGNFAFLEIWYIS). The Extracellular segment spans residues 94–117 (STVPNMLVNILSEIKTISFSGCFL). The cysteines at positions 115 and 207 are disulfide-linked. Residues 118 to 138 (QFYFFFSLGTTECFFLSVMAY) traverse the membrane as a helical segment. The Cytoplasmic segment spans residues 139–157 (DRYLAICRPLHYPSIMTGK). The helical transmembrane segment at 158–178 (FCIILVCVCWVGGFLCYPVPI) threads the bilayer. Over 179-215 (VLISQLPFCGPNIIDHLVCDPGPLFALACISAPSTEL) the chain is Extracellular. Residues 216 to 235 (ICYTFNSMIIFGPFLSILGS) traverse the membrane as a helical segment. The Cytoplasmic segment spans residues 236–255 (YTLVIRAVLCIPSGAGRTKA). The helical transmembrane segment at 256-276 (FSTCGSHLMVVSLFYGTLMVM) threads the bilayer. Residues 277–289 (YVSPTSGNPAGMQ) are Extracellular-facing. The chain crosses the membrane as a helical span at residues 290-310 (KIITLVYTAMTPFLNPLIYSL). Over 311 to 330 (RNKDMKDALKRVLGLTVSQN) the chain is Cytoplasmic.

The protein belongs to the G-protein coupled receptor 1 family.

The protein resides in the cell membrane. Its function is as follows. Odorant receptor. The protein is Olfactory receptor 11H6 (OR11H6) of Homo sapiens (Human).